Here is a 386-residue protein sequence, read N- to C-terminus: Glucose-1-phosphate adenylyltransferase (386 aa).

Residues Tyr100, Gly165, 180 to 181 (EK), and Ser191 contribute to the alpha-D-glucose 1-phosphate site.

It belongs to the bacterial/plant glucose-1-phosphate adenylyltransferase family. As to quaternary structure, homotetramer.

The catalysed reaction is alpha-D-glucose 1-phosphate + ATP + H(+) = ADP-alpha-D-glucose + diphosphate. The protein operates within glycan biosynthesis; glycogen biosynthesis. Involved in the biosynthesis of ADP-glucose, a building block required for the elongation reactions to produce glycogen. Catalyzes the reaction between ATP and alpha-D-glucose 1-phosphate (G1P) to produce pyrophosphate and ADP-Glc. This is Glucose-1-phosphate adenylyltransferase from Clostridium botulinum (strain Alaska E43 / Type E3).